Consider the following 773-residue polypeptide: Immunoglobulin domain and leucine-rich repeat-containing protein 2 (773 aa).

The N-terminal stretch at 1–20 (MRKFVFFVVAILIQIHTTTS) is a signal peptide. The Extracellular portion of the chain corresponds to 21 to 493 (QRNRSSSPSG…DWYSYDVFNS (473 aa)). 6 LRR repeats span residues 52–73 (TRNI…KIYG), 74–96 (SNIQ…IFAP), 97–120 (FPQL…VIHP), 122–144 (LKVL…LLSI), 145–167 (FPKI…DTSN), and 168–191 (TKLK…TLRV). An N-linked (GlcNAc...) asparagine glycan is attached at asparagine 114. Asparagine 204 carries an N-linked (GlcNAc...) asparagine glycan. LRR repeat units lie at residues 206 to 230 (STKL…DWKF), 233 to 251 (LRSL…QLDA), 252 to 275 (PLLN…ILTP), and 296 to 319 (PSTV…FIPM). An Ig-like domain is found at 349–479 (PVYAQTSIRK…GKDYGIYHFR (131 aa)). N-linked (GlcNAc...) asparagine glycosylation is found at asparagine 361 and asparagine 379. Cysteine 396 and cysteine 463 form a disulfide bridge. The helical transmembrane segment at 494-514 (VFWGGLATSLIVCLISFLLNI) threads the bilayer. The Cytoplasmic segment spans residues 515–773 (TWILTRKSAL…RSPDSPPEKR (259 aa)). Positions 725–773 (VRPGIIPTNAPSIRFTTKPTTSSISNEASTSSPSSSGAHRSPDSPPEKR) are disordered. Residues 733–745 (NAPSIRFTTKPTT) are compositionally biased toward polar residues. The segment covering 746–763 (SSISNEASTSSPSSSGAH) has biased composition (low complexity). Basic and acidic residues predominate over residues 764–773 (RSPDSPPEKR).

Its subcellular location is the membrane. The protein is Immunoglobulin domain and leucine-rich repeat-containing protein 2 of Caenorhabditis elegans.